The following is a 397-amino-acid chain: MGVKRVIVFDTTLRDGEQTPGVNFNSRDKLEIAYQLAKLGVDVIEAGFPAASNGDFEAVKNIADYVKGVTIAAMGRAVKEDIDRASSALKNAEKSRLHVFIATSDIHLQYKLKMTRDEVLKKAVEMVKYARGKFDEIEFSAEDASRTDWDFLVKVFSEVIDAGAHIINVPDTVGYAMPREYGELIRYIRNNVPNIDGVTISAHCHNDLGLAVANSLSAIENGATQVEVTVNGIGERAGNAAMEEVIMALNTRKDYFGLVHGINTKEIYNTSKLVSELTGIKLQPNKAIVGANAFRHQSGIHQHGVINNRLTYEIMRPEDIGVVPDTFALGKLSGRNAFELKVRQLGYNLSPGEISEAFRKFKDLADRKKTIVEEDIRFVVEETIEEFRGFREGEAWA.

The 263-residue stretch at 6-268 folds into the Pyruvate carboxyltransferase domain; sequence VIVFDTTLRD…VHGINTKEIY (263 aa). Residues Asp-15, His-203, His-205, and Asn-239 each contribute to the Mn(2+) site.

This sequence belongs to the alpha-IPM synthase/homocitrate synthase family. LeuA type 1 subfamily. In terms of assembly, homodimer. Requires Mn(2+) as cofactor.

The protein resides in the cytoplasm. It carries out the reaction 3-methyl-2-oxobutanoate + acetyl-CoA + H2O = (2S)-2-isopropylmalate + CoA + H(+). The protein operates within amino-acid biosynthesis; L-leucine biosynthesis; L-leucine from 3-methyl-2-oxobutanoate: step 1/4. In terms of biological role, catalyzes the condensation of the acetyl group of acetyl-CoA with 3-methyl-2-oxobutanoate (2-ketoisovalerate) to form 3-carboxy-3-hydroxy-4-methylpentanoate (2-isopropylmalate). This chain is 2-isopropylmalate synthase 1, found in Caldanaerobacter subterraneus subsp. tengcongensis (strain DSM 15242 / JCM 11007 / NBRC 100824 / MB4) (Thermoanaerobacter tengcongensis).